A 404-amino-acid polypeptide reads, in one-letter code: Serine/threonine transporter SstT (404 aa).

8 helical membrane passes run 17–37 (IGIG…LTGF), 39–59 (ILGK…VFAL), 75–95 (MTLI…VAVL), 138–158 (ALAT…GLAL), 179–199 (IVVW…FTTI), 212–232 (FLIL…NPLI), 287–307 (IPLG…VLTL), and 313–333 (FGIP…AVSA).

The protein belongs to the dicarboxylate/amino acid:cation symporter (DAACS) (TC 2.A.23) family.

It is found in the cell membrane. The enzyme catalyses L-serine(in) + Na(+)(in) = L-serine(out) + Na(+)(out). It carries out the reaction L-threonine(in) + Na(+)(in) = L-threonine(out) + Na(+)(out). Involved in the import of serine and threonine into the cell, with the concomitant import of sodium (symport system). This is Serine/threonine transporter SstT from Streptococcus pyogenes serotype M2 (strain MGAS10270).